The following is a 629-amino-acid chain: tRNA uridine 5-carboxymethylaminomethyl modification enzyme MnmG (629 aa).

11–16 (GGGHAG) is an FAD binding site. 273–287 (GPRYCPSFEDKVVRF) provides a ligand contact to NAD(+).

It belongs to the MnmG family. As to quaternary structure, homodimer. Heterotetramer of two MnmE and two MnmG subunits. The cofactor is FAD.

It is found in the cytoplasm. NAD-binding protein involved in the addition of a carboxymethylaminomethyl (cmnm) group at the wobble position (U34) of certain tRNAs, forming tRNA-cmnm(5)s(2)U34. The sequence is that of tRNA uridine 5-carboxymethylaminomethyl modification enzyme MnmG from Mycoplasma capricolum subsp. capricolum (strain California kid / ATCC 27343 / NCTC 10154).